A 679-amino-acid polypeptide reads, in one-letter code: Probable metal-nicotianamine transporter YSL18 (679 aa).

Positions 1 to 17 (MESVGDPRDGPSTERAF) are enriched in basic and acidic residues. Residues 1-21 (MESVGDPRDGPSTERAFEGQP) are disordered. The next 14 helical transmembrane spans lie at 29 to 49 (VTLRAVVASVALGVALSSVMM), 51 to 71 (LVFTSGIIPSLNISAGLLGFF), 101 to 121 (CVVACASMTYSGGFGSYLLAM), 144 to 164 (FGRMMAFFFLVSFVGLLAIVP), 211 to 231 (LASLFWSIFQWFYTGGPNCGF), 255 to 275 (VGIGMISPHLINVSMLFGSII), 309 to 329 (VFCAIAMILGDGIFQLVAISL), 379 to 399 (FAISGYVVLATVSTVVIPLMY), 407 to 427 (VAAAYAFAPVLAFCNAYGTGV), 441 to 461 (ILMFASWIGIKNGGIVGSLVI), 497 to 517 (VIGTAMGCVVNPAVFTVFHHF), 547 to 567 (LPKYCLAISATFFVLALAVCA), 593 to 613 (FLLVPAVSIDMCIGSLIVFLW), and 627 to 647 (VLASGLICGDGLFSIPYALLA).

Belongs to the YSL (TC 2.A.67.2) family.

The protein resides in the membrane. Functionally, may be involved in the transport of nicotianamine-chelated metals. This chain is Probable metal-nicotianamine transporter YSL18 (YSL18), found in Oryza sativa subsp. japonica (Rice).